A 377-amino-acid polypeptide reads, in one-letter code: UPF0425 pyridoxal phosphate-dependent protein MTH_1914 (377 aa).

An N6-(pyridoxal phosphate)lysine modification is found at Lys-207.

This sequence belongs to the UPF0425 family. Pyridoxal 5'-phosphate serves as cofactor.

The protein is UPF0425 pyridoxal phosphate-dependent protein MTH_1914 of Methanothermobacter thermautotrophicus (strain ATCC 29096 / DSM 1053 / JCM 10044 / NBRC 100330 / Delta H) (Methanobacterium thermoautotrophicum).